The primary structure comprises 180 residues: Adenine phosphoribosyltransferase (180 aa).

The protein belongs to the purine/pyrimidine phosphoribosyltransferase family. As to quaternary structure, homodimer.

The protein localises to the cytoplasm. It carries out the reaction AMP + diphosphate = 5-phospho-alpha-D-ribose 1-diphosphate + adenine. It functions in the pathway purine metabolism; AMP biosynthesis via salvage pathway; AMP from adenine: step 1/1. Its function is as follows. Catalyzes a salvage reaction resulting in the formation of AMP, that is energically less costly than de novo synthesis. This is Adenine phosphoribosyltransferase from Mannheimia succiniciproducens (strain KCTC 0769BP / MBEL55E).